The primary structure comprises 418 residues: Creatine kinase U-type, mitochondrial (418 aa).

A mitochondrion-targeting transit peptide spans 1-39; it reads MAGPFSRLLSARPGLRLLALAGAGSLTAGILLRPESVGA. The interval 40–64 is cardiolipin-binding; the sequence is AAAERRRLYPPSAEYPDLRKHNNCM. In terms of domain architecture, Phosphagen kinase N-terminal spans 46-132; sequence RLYPPSAEYP…FDPVIQERHN (87 aa). The residue at position 152 (Ser152) is a Phosphoserine. A Phosphagen kinase C-terminal domain is found at 159-401; the sequence is YVLSSRVRTG…NYLIDCERRL (243 aa). 162-166 is an ATP binding site; that stretch reads SSRVR. Ser197 is subject to Phosphoserine. Phosphothreonine is present on Thr214. Residue His225 participates in ATP binding. Phosphoserine is present on Ser233. ATP is bound by residues Arg270, Arg326, and 354 to 359; that span reads RGTGGV. A Phosphothreonine modification is found at Thr356. Position 366 is a phosphoserine (Ser366). Position 369 (Asp369) interacts with ATP.

The protein belongs to the ATP:guanido phosphotransferase family. Exists as an octamer composed of four MTCK homodimers.

It localises to the mitochondrion inner membrane. The catalysed reaction is creatine + ATP = N-phosphocreatine + ADP + H(+). In terms of biological role, reversibly catalyzes the transfer of phosphate between ATP and various phosphogens (e.g. creatine phosphate). Creatine kinase isoenzymes play a central role in energy transduction in tissues with large, fluctuating energy demands, such as skeletal muscle, heart, brain and spermatozoa. The protein is Creatine kinase U-type, mitochondrial (Ckmt1) of Mus musculus (Mouse).